Reading from the N-terminus, the 110-residue chain is Insulin (110 aa).

An N-terminal signal peptide occupies residues 1–24 (MALWMRLLPLLALLALWAPAPTRA). 3 cysteine pairs are disulfide-bonded: cysteine 31–cysteine 96, cysteine 43–cysteine 109, and cysteine 95–cysteine 100. The propeptide at 57–87 (EVEDLQVRDVELAGAPGEGGLQPLALEGALQ) is c peptide.

The protein belongs to the insulin family. As to quaternary structure, heterodimer of a B chain and an A chain linked by two disulfide bonds.

It localises to the secreted. In terms of biological role, insulin decreases blood glucose concentration. It increases cell permeability to monosaccharides, amino acids and fatty acids. It accelerates glycolysis, the pentose phosphate cycle, and glycogen synthesis in liver. The sequence is that of Insulin (INS) from Canis lupus familiaris (Dog).